Here is a 541-residue protein sequence, read N- to C-terminus: Phosphoenolpyruvate carboxykinase (ATP) (541 aa).

3 residues coordinate substrate: arginine 67, tyrosine 207, and lysine 213. ATP is bound by residues lysine 213, histidine 232, and 248-256; that span reads GLSGTGKTT. Lysine 213 and histidine 232 together coordinate Mn(2+). Aspartate 269 contributes to the Mn(2+) binding site. ATP-binding positions include glutamate 297, arginine 333, 449-450, and threonine 455; that span reads RI. Substrate is bound at residue arginine 333.

This sequence belongs to the phosphoenolpyruvate carboxykinase (ATP) family. Monomer. Requires Mn(2+) as cofactor.

It localises to the cytoplasm. The catalysed reaction is oxaloacetate + ATP = phosphoenolpyruvate + ADP + CO2. Its pathway is carbohydrate biosynthesis; gluconeogenesis. Its function is as follows. Involved in the gluconeogenesis. Catalyzes the conversion of oxaloacetate (OAA) to phosphoenolpyruvate (PEP) through direct phosphoryl transfer between the nucleoside triphosphate and OAA. The sequence is that of Phosphoenolpyruvate carboxykinase (ATP) from Aliivibrio salmonicida (strain LFI1238) (Vibrio salmonicida (strain LFI1238)).